The chain runs to 430 residues: Enolase (430 aa).

(2R)-2-phosphoglycerate is bound at residue Q165. E207 serves as the catalytic Proton donor. D244, E287, and D314 together coordinate Mg(2+). 4 residues coordinate (2R)-2-phosphoglycerate: K339, R368, S369, and K390. K339 acts as the Proton acceptor in catalysis.

This sequence belongs to the enolase family. Component of the RNA degradosome, a multiprotein complex involved in RNA processing and mRNA degradation. The cofactor is Mg(2+).

Its subcellular location is the cytoplasm. It localises to the secreted. The protein localises to the cell surface. The catalysed reaction is (2R)-2-phosphoglycerate = phosphoenolpyruvate + H2O. Its pathway is carbohydrate degradation; glycolysis; pyruvate from D-glyceraldehyde 3-phosphate: step 4/5. Its function is as follows. Catalyzes the reversible conversion of 2-phosphoglycerate (2-PG) into phosphoenolpyruvate (PEP). It is essential for the degradation of carbohydrates via glycolysis. In Stenotrophomonas maltophilia (strain K279a), this protein is Enolase.